The following is a 287-amino-acid chain: ATP synthase gamma chain (287 aa).

This sequence belongs to the ATPase gamma chain family. F-type ATPases have 2 components, CF(1) - the catalytic core - and CF(0) - the membrane proton channel. CF(1) has five subunits: alpha(3), beta(3), gamma(1), delta(1), epsilon(1). CF(0) has three main subunits: a, b and c.

The protein localises to the cell membrane. Its function is as follows. Produces ATP from ADP in the presence of a proton gradient across the membrane. The gamma chain is believed to be important in regulating ATPase activity and the flow of protons through the CF(0) complex. The protein is ATP synthase gamma chain of Staphylococcus carnosus (strain TM300).